The chain runs to 251 residues: 5'-nucleotidase SurE (251 aa).

4 residues coordinate a divalent metal cation: aspartate 8, aspartate 9, serine 39, and asparagine 95.

This sequence belongs to the SurE nucleotidase family. The cofactor is a divalent metal cation.

It localises to the cytoplasm. It carries out the reaction a ribonucleoside 5'-phosphate + H2O = a ribonucleoside + phosphate. Its function is as follows. Nucleotidase that shows phosphatase activity on nucleoside 5'-monophosphates. In Ralstonia nicotianae (strain ATCC BAA-1114 / GMI1000) (Ralstonia solanacearum), this protein is 5'-nucleotidase SurE.